Consider the following 409-residue polypeptide: Probable tRNA pseudouridine synthase D (409 aa).

Asp-73 acts as the Nucleophile in catalysis. Residues 146 to 365 (GFPNFFGDQR…SSGDRRIISA (220 aa)) enclose the TRUD domain.

This sequence belongs to the pseudouridine synthase TruD family.

It carries out the reaction uridine(13) in tRNA = pseudouridine(13) in tRNA. In terms of biological role, could be responsible for synthesis of pseudouridine from uracil-13 in transfer RNAs. This Thermoplasma volcanium (strain ATCC 51530 / DSM 4299 / JCM 9571 / NBRC 15438 / GSS1) protein is Probable tRNA pseudouridine synthase D.